Reading from the N-terminus, the 318-residue chain is uncharacterized protein (318 aa).

Residues 2–22 (ILELIIVLVLLVLAFKSLKIL) form a helical membrane-spanning segment. The tract at residues 295 to 318 (SDPEDKGVSEVETESQPAEKPEKH) is disordered.

It belongs to the band 7/mec-2 family.

The protein localises to the membrane. This is an uncharacterized protein from Methanothermobacter thermautotrophicus (strain ATCC 29096 / DSM 1053 / JCM 10044 / NBRC 100330 / Delta H) (Methanobacterium thermoautotrophicum).